A 474-amino-acid polypeptide reads, in one-letter code: Cysteine protease ATG4A (474 aa).

The interval 1 to 32 (MTSLPGRGVSPSSSDPLCEGNAAPSSSSSSGQ) is disordered. C161 (nucleophile) is an active-site residue. Active-site residues include D358 and H360. Polar residues predominate over residues 439-449 (KQMYNEESSSG). Positions 439–474 (KQMYNEESSSGDGMDSINVEGLDGSGETGEEEWQIL) are disordered.

Belongs to the peptidase C54 family. As to quaternary structure, interacts with ATG8.

Its subcellular location is the cytoplasm. It carries out the reaction [protein]-C-terminal L-amino acid-glycyl-phosphatidylethanolamide + H2O = [protein]-C-terminal L-amino acid-glycine + a 1,2-diacyl-sn-glycero-3-phosphoethanolamine. In terms of biological role, cysteine protease that plays a key role in autophagy by mediating both proteolytic activation and delipidation of ATG8 family proteins. The protease activity is required for proteolytic activation of ATG8 family proteins: cleaves the C-terminal amino acid of ATG8 proteins to reveal a C-terminal glycine. Exposure of the glycine at the C-terminus is essential for ATG8 proteins conjugation to phosphatidylethanolamine (PE) and insertion to membranes, which is necessary for autophagy. In addition to the protease activity, also mediates delipidation of PE-conjugated ATG8 proteins. This chain is Cysteine protease ATG4A (ATG4A), found in Oryza sativa subsp. japonica (Rice).